Consider the following 342-residue polypeptide: Olfactory receptor 51F2 (342 aa).

Residues 1 to 39 (MTETSLSSQCFPMSVLNNTIAEPLIFLLMGIPGLKATQY) lie on the Extracellular side of the membrane. An N-linked (GlcNAc...) asparagine glycan is attached at Asn17. The chain crosses the membrane as a helical span at residues 40 to 60 (WISIPFCLLYVVAVSGNSMIL). At 61-68 (FVVLCERS) the chain is on the cytoplasmic side. A helical transmembrane segment spans residues 69 to 89 (LHKPMYYFLSMLSATDLSLSL). The Extracellular segment spans residues 90–113 (CTLSTTLGVFWFEAREINLNACIA). Cys111 and Cys203 form a disulfide bridge. A helical membrane pass occupies residues 114–134 (QMFFLHGFTFMESGVLLAMAF). Over 135 to 153 (DRFVAICYPLRYTTILTNA) the chain is Cytoplasmic. Residues 154 to 174 (RIAKIGMSMLIRNVAVMLPVM) traverse the membrane as a helical segment. The Extracellular portion of the chain corresponds to 175–210 (LFVKRLSFCSSMVLSHSYCYHVDLIQLSCTDNRINS). The helical transmembrane segment at 211–231 (ILGLFALLSTTGFDCPCILLS) threads the bilayer. The Cytoplasmic portion of the chain corresponds to 232–251 (YILIIRSVLSIASSEERRKA). The helical transmembrane segment at 252–272 (FNTCTSHISAVSIFYLPLISL) threads the bilayer. Residues 273–287 (SLVHRYGHSAPPFVH) lie on the Extracellular side of the membrane. Residues 288-308 (IIMANVFLLIPPVLNPIIYSV) form a helical membrane-spanning segment. The Cytoplasmic portion of the chain corresponds to 309-342 (KIKQIQKAIIKVLIQKHSKSNHQLFLIRDKAIYE).

This sequence belongs to the G-protein coupled receptor 1 family.

Its subcellular location is the cell membrane. Functionally, odorant receptor. The protein is Olfactory receptor 51F2 (OR51F2) of Homo sapiens (Human).